The primary structure comprises 331 residues: Cytosolic 5'-nucleotidase 3A (331 aa).

Aspartate 83 (nucleophile) is an active-site residue. Aspartate 83 and aspartate 85 together coordinate Mg(2+). The active-site Proton donor is aspartate 85. CMP is bound at residue glutamate 130. Residues glutamate 130 and serine 151 each coordinate N(7)-methyl-GMP. Residues serine 198–glycine 200 and lysine 247 contribute to the substrate site. Aspartate 272 is a Mg(2+) binding site. A Phosphoserine modification is found at serine 273.

It belongs to the pyrimidine 5'-nucleotidase family. Monomer. Isoform 2 is highly expressed in the brain, heart, spleen, kidney and blood. Isoform 2 is expressed (at protein level) in the spleen, skeletal muscle and gastrointestinal epithelia.

Its subcellular location is the cytoplasm. The enzyme catalyses N(7)-methyl-GMP + H2O = N(7)-methylguanosine + phosphate. It catalyses the reaction a ribonucleoside 5'-phosphate + H2O = a ribonucleoside + phosphate. Nucleotidase which shows specific activity towards cytidine monophosphate (CMP) and 7-methylguanosine monophosphate (m(7)GMP). CMP seems to be the preferred substrate. The sequence is that of Cytosolic 5'-nucleotidase 3A (Nt5c3a) from Mus musculus (Mouse).